We begin with the raw amino-acid sequence, 189 residues long: MGIDINHKWDRKVRRTKPKSLDVYLRLLVKLYRFLYRRTHKKFNKIILRRLFMSRTNQPPISLSRVAKLMKLRGKDENTIAVVVGTVTNDDRKLYCPKMNVCALRVTEKARERILKWGGKIYTFDQLALVAPTGKNTVLMQGERTAREAFTHFGRAPGVPHSNTRPYVQSKGRKYEKARGRRSSCGFKN.

Belongs to the eukaryotic ribosomal protein eL18 family.

The protein localises to the cytoplasm. The chain is Large ribosomal subunit protein eL18 (RpL18) from Aedes aegypti (Yellowfever mosquito).